Reading from the N-terminus, the 347-residue chain is MAIDEDKQKAISLAIKQIDKVFGKGALVRLGDKQVEKIDAISTGSLGLDLALGIGGVPKGRIIEIYGPESSGKTTLSLHIIAECQKNGGVCAFIDAEHALDVYYAKRLGVDTENLLVSQPSTGEEALEILETITRSGGIDLVVVDSVAALTPKAEIDGDMGDQHVGLQARLMSHALRKITGVLHKMNTTLIFINQIRMKIGMMGYGSPETTTGGNALKFYASVRIDIRRIASLKQNEQHIGNRAKAKVVKNKVAPPFREAEFDIMFGEGISKEGEIIDYGVKLDIVDKSGAWLSYQDKKLGQGRENAKALLKEDKALADEITLKIKESIGSNEEIMPLPDEPLEEME.

67–74 (GPESSGKT) contributes to the ATP binding site.

The protein belongs to the RecA family.

Its subcellular location is the cytoplasm. In terms of biological role, can catalyze the hydrolysis of ATP in the presence of single-stranded DNA, the ATP-dependent uptake of single-stranded DNA by duplex DNA, and the ATP-dependent hybridization of homologous single-stranded DNAs. It interacts with LexA causing its activation and leading to its autocatalytic cleavage. This is Protein RecA from Helicobacter pylori (strain P12).